The chain runs to 363 residues: UDP-N-acetylglucosamine--N-acetylmuramyl-(pentapeptide) pyrophosphoryl-undecaprenol N-acetylglucosamine transferase (363 aa).

UDP-N-acetyl-alpha-D-glucosamine is bound by residues 10-12, N124, S195, I250, and Q295; that span reads TGG.

The protein belongs to the glycosyltransferase 28 family. MurG subfamily.

The protein localises to the cell membrane. It carries out the reaction di-trans,octa-cis-undecaprenyl diphospho-N-acetyl-alpha-D-muramoyl-L-alanyl-D-glutamyl-meso-2,6-diaminopimeloyl-D-alanyl-D-alanine + UDP-N-acetyl-alpha-D-glucosamine = di-trans,octa-cis-undecaprenyl diphospho-[N-acetyl-alpha-D-glucosaminyl-(1-&gt;4)]-N-acetyl-alpha-D-muramoyl-L-alanyl-D-glutamyl-meso-2,6-diaminopimeloyl-D-alanyl-D-alanine + UDP + H(+). The protein operates within cell wall biogenesis; peptidoglycan biosynthesis. Cell wall formation. Catalyzes the transfer of a GlcNAc subunit on undecaprenyl-pyrophosphoryl-MurNAc-pentapeptide (lipid intermediate I) to form undecaprenyl-pyrophosphoryl-MurNAc-(pentapeptide)GlcNAc (lipid intermediate II). The sequence is that of UDP-N-acetylglucosamine--N-acetylmuramyl-(pentapeptide) pyrophosphoryl-undecaprenol N-acetylglucosamine transferase from Listeria monocytogenes serotype 4a (strain HCC23).